We begin with the raw amino-acid sequence, 667 residues long: MDGLRASAGLLRRGRLRRRRQQQPHSGSVLALPLRPRKIRRQLRRSVSSRMAALRAQTLQSEDSEDSRVESTVGEPGDPLAGGTAALSDATGREPHGQLGPVELLEASPASRSLQTPRALVEAQTPAARLVEAQTPAARLVEAHTPAARLVEAHTPPARLVEASALPARLVETSALLCSTQHLAAVPPSVAPAMLSGPQGESTGEELPWDSPLQRILAELNRIPSSRRRAARLFEWLISPMPPDHFYRRLWEREAVLVRRQDHSYYQGLFSTAVLDSILRNEEVQFGQHLDAARYINGRRETLNPPGRALPAAAWSLYRAGCSLRLLCPQAFSTTVWQFLAVLQEQFGSMAGSNVYLTPPNSQGFAPHYDDIEAFVLQLEGRKLWRVYRPRVPTEELALTSSPNFSQDDLGEPVLQTVLEPGDLLYFPRGFIHQAECQDGVHSLHLTLSTFQRNTWGDFLEAVLPLAVQAAMEENVEFRRGLPRDFMDYMGAQHSDSKDPRRTAFMEKVRVLVARLGHFAPVDAVADQRAKDFIHDSLPPVLTDRERALSVYGLPIRWEAGEPVNVGAQLTTETEVHMLQDGIARLVGEGGHLFLYYTVENSRVYHLEEPKCLEIYPQQADAMELLLRSYPEFVRVGDLPCDTVEDQLSLATMLYDKGLLLTKMPLT.

At Met-1 the chain carries N-acetylmethionine. Low complexity predominate over residues 1–11 (MDGLRASAGLL). Residues 1 to 99 (MDGLRASAGL…ATGREPHGQL (99 aa)) form a disordered region. Composition is skewed to basic residues over residues 12 to 22 (RRGRLRRRRQQ) and 35 to 44 (RPRKIRRQLR). Phosphoserine occurs at positions 61, 64, and 108. In terms of domain architecture, JmjC spans 322-467 (CSLRLLCPQA…DFLEAVLPLA (146 aa)). 3 residues coordinate Fe cation: His-368, Asp-370, and His-433.

The protein belongs to the ROX family. NO66 subfamily. As to quaternary structure, interacts with SP7/OSX; the interaction is direct. Interacts with MYC. Interacts with PHF19; leading to its recruitment to H3K36me3 sites. Fe(2+) is required as a cofactor.

It is found in the nucleus. Its subcellular location is the nucleolus. The protein localises to the nucleoplasm. The catalysed reaction is N(6),N(6)-dimethyl-L-lysyl(36)-[histone H3] + 2 2-oxoglutarate + 2 O2 = L-lysyl(36)-[histone H3] + 2 formaldehyde + 2 succinate + 2 CO2. It carries out the reaction N(6)-methyl-L-lysyl-[protein] + 2-oxoglutarate + O2 = L-lysyl-[protein] + formaldehyde + succinate + CO2. The enzyme catalyses L-histidyl-[protein] + 2-oxoglutarate + O2 = (3S)-3-hydroxy-L-histidyl-[protein] + succinate + CO2. Its function is as follows. Oxygenase that can act as both a histone lysine demethylase and a ribosomal histidine hydroxylase. Specifically demethylates 'Lys-4' (H3K4me) and 'Lys-36' (H3K36me) of histone H3, thereby playing a central role in histone code. Preferentially demethylates trimethylated H3 'Lys-4' (H3K4me3) and monomethylated H3 'Lys-4' (H3K4me1) residues, while it has weaker activity for dimethylated H3 'Lys-36' (H3K36me2). Acts as a regulator of osteoblast differentiation via its interaction with SP7/OSX by demethylating H3K4me and H3K36me, thereby inhibiting SP7/OSX-mediated promoter activation. Also catalyzes demethylation of non-histone proteins, such as CGAS: demethylation of monomethylated CGAS promotes interaction between CGAS and PARP1, followed by PARP1 inactivation. Also catalyzes the hydroxylation of 60S ribosomal protein L8 on 'His-216', thereby playing a role in ribosome biogenesis. Participates in MYC-induced transcriptional activation. The polypeptide is Ribosomal oxygenase 1 (RIOX1) (Bos taurus (Bovine)).